A 142-amino-acid polypeptide reads, in one-letter code: DNA polymerase III subunit chi (142 aa).

This sequence belongs to the DNA polymerase III chi/HolC chain family. DNA polymerase III contains a core (composed of alpha, epsilon and theta chains) that associates with a tau subunit. This core dimerizes to form the POLIII' complex. PolIII' associates with the gamma complex (composed of gamma, delta, delta', psi and chi chains) and with the beta chain to form the complete DNA polymerase III complex. Interacts directly with the psi subunit (holD). The only subunit of the DNA polymerase III holoenzyme known to interact with single-stranded DNA binding protein (SSB).

It carries out the reaction DNA(n) + a 2'-deoxyribonucleoside 5'-triphosphate = DNA(n+1) + diphosphate. In terms of biological role, part of the beta sliding clamp loading complex, which hydrolyzes ATP to load the beta clamp onto primed DNA to form the DNA replication pre-initiation complex. DNA polymerase III is a complex, multichain enzyme responsible for most of the replicative synthesis in bacteria. This DNA polymerase also exhibits 3' to 5' exonuclease activity. This Pseudomonas aeruginosa (strain ATCC 15692 / DSM 22644 / CIP 104116 / JCM 14847 / LMG 12228 / 1C / PRS 101 / PAO1) protein is DNA polymerase III subunit chi.